The following is a 153-amino-acid chain: Endoribonuclease YbeY (153 aa).

Residues His114, His118, and His124 each coordinate Zn(2+).

This sequence belongs to the endoribonuclease YbeY family. Zn(2+) is required as a cofactor.

It localises to the cytoplasm. Its function is as follows. Single strand-specific metallo-endoribonuclease involved in late-stage 70S ribosome quality control and in maturation of the 3' terminus of the 16S rRNA. This Shewanella sp. (strain MR-4) protein is Endoribonuclease YbeY.